The following is a 166-amino-acid chain: Putative 4-hydroxy-4-methyl-2-oxoglutarate aldolase (166 aa).

Substrate-binding positions include 74 to 77 (GDQI) and Arg-96. Asp-97 lines the a divalent metal cation pocket.

It belongs to the class II aldolase/RraA-like family. As to quaternary structure, homotrimer. A divalent metal cation is required as a cofactor.

The catalysed reaction is 4-hydroxy-4-methyl-2-oxoglutarate = 2 pyruvate. It carries out the reaction oxaloacetate + H(+) = pyruvate + CO2. Its function is as follows. Catalyzes the aldol cleavage of 4-hydroxy-4-methyl-2-oxoglutarate (HMG) into 2 molecules of pyruvate. Also contains a secondary oxaloacetate (OAA) decarboxylase activity due to the common pyruvate enolate transition state formed following C-C bond cleavage in the retro-aldol and decarboxylation reactions. In Xanthomonas campestris pv. campestris (strain B100), this protein is Putative 4-hydroxy-4-methyl-2-oxoglutarate aldolase.